The chain runs to 195 residues: Probable nicotinate-nucleotide adenylyltransferase (195 aa).

This sequence belongs to the NadD family.

It catalyses the reaction nicotinate beta-D-ribonucleotide + ATP + H(+) = deamido-NAD(+) + diphosphate. Its pathway is cofactor biosynthesis; NAD(+) biosynthesis; deamido-NAD(+) from nicotinate D-ribonucleotide: step 1/1. In terms of biological role, catalyzes the reversible adenylation of nicotinate mononucleotide (NaMN) to nicotinic acid adenine dinucleotide (NaAD). This is Probable nicotinate-nucleotide adenylyltransferase from Salinibacter ruber (strain DSM 13855 / M31).